Reading from the N-terminus, the 448-residue chain is MNQPLNVAPPVSSELNLRAHWMPFSANRNFQKDPRIIVAAEGSWLTDDKGRKVYDSLSGLWTCGAGHSRKEIQEAVARQLGTLDYSPGFQYGHPLSFQLAEKIAGLLPGELNHVFFTGSGSECADTSIKMARAYWRLKGQPQKTKLIGRARGYHGVNVAGTSLGGIGGNRKMFGQLMDVDHLPHTLQPGMAFTRGMAQTGGVELANELLKLIELHDASNIAAVIVEPMSGSAGVLVPPVGYLQRLREICDQHNILLIFDEVITAFGRLGTYSGAEYFGVTPDLMNVAKQVTNGAVPMGAVIASSEIYDTFMNQALPEHAVEFSHGYTYSAHPVACAAGLAALDILARDNLVQQSAELAPHFEKGLHGLQGAKNVIDIRNCGLAGAIQIAPRDGDPTVRPFEAGMKLWQQGFYVRFGGDTLQFGPTFNARPEELDRLFDAVGEALNGIA.

Position 61 (W61) interacts with substrate. Residue 120-121 (GS) participates in pyridoxal 5'-phosphate binding. The residue at position 288 (K288) is an N6-(pyridoxal phosphate)lysine. T327 is a pyridoxal 5'-phosphate binding site. Residues R414 and Q421 each contribute to the substrate site.

The protein belongs to the class-III pyridoxal-phosphate-dependent aminotransferase family. Homotetramer. Pyridoxal 5'-phosphate is required as a cofactor.

The catalysed reaction is 3-oxopropanoate + L-alanine = beta-alanine + pyruvate. Its activity is regulated as follows. Inhibited by gabaculine (5-amino-1,3-cyclohexadienylcarboxylic acid). Its function is as follows. Involved in the degradation of beta-alanine. Catalyzes the transfer of the amino group from beta-alanine to pyruvate to yield L-alanine and 3-oxopropanoate. It can also accept both 4-aminobutyrate and (S)-alpha-methylbenzylamine (MBA) as amino-group donors in the presence of pyruvate as an amine acceptor. The chain is Beta-alanine--pyruvate aminotransferase (bauA) from Pseudomonas aeruginosa (strain ATCC 15692 / DSM 22644 / CIP 104116 / JCM 14847 / LMG 12228 / 1C / PRS 101 / PAO1).